Here is a 194-residue protein sequence, read N- to C-terminus: Peptide deformylase (194 aa).

Fe cation is bound by residues Cys105 and His147. The active site involves Glu148. Position 151 (His151) interacts with Fe cation.

It belongs to the polypeptide deformylase family. It depends on Fe(2+) as a cofactor.

The enzyme catalyses N-terminal N-formyl-L-methionyl-[peptide] + H2O = N-terminal L-methionyl-[peptide] + formate. In terms of biological role, removes the formyl group from the N-terminal Met of newly synthesized proteins. Requires at least a dipeptide for an efficient rate of reaction. N-terminal L-methionine is a prerequisite for activity but the enzyme has broad specificity at other positions. The sequence is that of Peptide deformylase from Flavobacterium psychrophilum (strain ATCC 49511 / DSM 21280 / CIP 103535 / JIP02/86).